Here is a 341-residue protein sequence, read N- to C-terminus: Transcription factor ETV7 (341 aa).

One can recognise a PNT domain in the interval 33 to 117 (NLLGEGGICK…ELLQYIKTQR (85 aa)). Positions 224-305 (RLLWDYVYQL…PGQKLLFRFL (82 aa)) form a DNA-binding region, ETS. The segment at 315–341 (KHSHLEPLESQEQDRIEFKDKRPEISP) is disordered.

The protein belongs to the ETS family. Expressed in hematopoietic tissues.

Its subcellular location is the nucleus. Functionally, transcriptional repressor; binds to the DNA sequence 5'-CCGGAAGT-3'. Isoform A does not seem to have a repressor activity. Isoform C does not seem to have a repressor activity. This Homo sapiens (Human) protein is Transcription factor ETV7 (ETV7).